The chain runs to 192 residues: MSAKAQSLPIPPERVSEILDEWKRSPMRRPRIVKVTVNISIGQSGERLQRAAEVLEELTGQKPVFRKAKRTIRAFGVRKGENIAVMVTLRGEKALNFLKRALDAVGHRIKTSSIDEHGNVSFGIEEHILIPGVKYDPRVGILGMDVAITIQRPGHRIVERRRQRRGHIPRRHRVTREETMVLLNQLFGVTFV.

This sequence belongs to the universal ribosomal protein uL5 family. In terms of assembly, part of the 50S ribosomal subunit; contacts the 5S rRNA and probably tRNA. Forms a bridge to the 30S subunit in the 70S ribosome.

In terms of biological role, this is one of the proteins that bind and probably mediate the attachment of the 5S RNA into the large ribosomal subunit, where it forms part of the central protuberance. In the 70S ribosome it contacts protein S13 of the 30S subunit (bridge B1b), connecting the 2 subunits; this bridge is implicated in subunit movement. May contact the P site tRNA; the 5S rRNA and some of its associated proteins might help stabilize positioning of ribosome-bound tRNAs. This chain is Large ribosomal subunit protein uL5, found in Aeropyrum pernix (strain ATCC 700893 / DSM 11879 / JCM 9820 / NBRC 100138 / K1).